The primary structure comprises 110 residues: MRRAKLDKNATSNAVAYCSATGRHNLSATHASRLAFSVFSHPNVKAFLKSMEKETIDDMIMGRDELLSELTDIASTTIDDIVQIVHSSDNMMNVKRGRFIQDLSRSLLTT.

2 DNA-binding regions (H-T-H motif) span residues 12–31 (SNAV…ATHA) and 27–46 (SATH…NVKA).

This protein may possess the specific endonuclease activity required for cleavage at the pac site. This chain is Putative packaging signal terminase, found in Vibrio phage CP-T1 (Bacteriophage CP-T1).